We begin with the raw amino-acid sequence, 327 residues long: MANNASLEQDPNHCSAINNSIPLIQGKLPTLTVSGKIRVTVTFFLFLLSTAFNASFLLKLQKWTQKRKKGKKLSRMKVLLKHLTLANLLETLIVMPLDGMWNITVQWYAGEFLCKVLSYLKLFSMYAPAFMMVVISLDRSLAITQPLAVQSNSKLEQSMISLAWILSIVFAGPQLYIFRMIYLADGSGPTVFSQCVTHCSFPQWWHQAFYNFFTFGCLFIIPLLIMLICNAKIIFALTRVLHQDPRKLQLNQSKNNIPRARLRTLKMTVAFATSFVVCWTPYYVLGIWYWFDPEMLNRVSEPVNHFFFLFAFLNPCFDPLIYGYFSL.

Topologically, residues 1-38 are extracellular; sequence MANNASLEQDPNHCSAINNSIPLIQGKLPTLTVSGKIR. N-linked (GlcNAc...) asparagine glycans are attached at residues Asn4 and Asn18. The helical transmembrane segment at 39-58 threads the bilayer; that stretch reads VTVTFFLFLLSTAFNASFLL. Over 59 to 77 the chain is Cytoplasmic; the sequence is KLQKWTQKRKKGKKLSRMK. Residues 78 to 97 form a helical membrane-spanning segment; sequence VLLKHLTLANLLETLIVMPL. Topologically, residues 98-115 are extracellular; it reads DGMWNITVQWYAGEFLCK. Asn102 carries an N-linked (GlcNAc...) asparagine glycan. The cysteines at positions 114 and 195 are disulfide-linked. A helical transmembrane segment spans residues 116 to 137; that stretch reads VLSYLKLFSMYAPAFMMVVISL. Residues 138–164 lie on the Cytoplasmic side of the membrane; the sequence is DRSLAITQPLAVQSNSKLEQSMISLAW. A helical membrane pass occupies residues 165-184; that stretch reads ILSIVFAGPQLYIFRMIYLA. The Extracellular segment spans residues 185–211; it reads DGSGPTVFSQCVTHCSFPQWWHQAFYN. The helical transmembrane segment at 212–231 threads the bilayer; it reads FFTFGCLFIIPLLIMLICNA. Residues 232-280 are Cytoplasmic-facing; sequence KIIFALTRVLHQDPRKLQLNQSKNNIPRARLRTLKMTVAFATSFVVCWT. Residues 281–299 form a helical membrane-spanning segment; that stretch reads PYYVLGIWYWFDPEMLNRV. Over 300–305 the chain is Extracellular; the sequence is SEPVNH. A helical transmembrane segment spans residues 306-325; that stretch reads FFFLFAFLNPCFDPLIYGYF. The Cytoplasmic segment spans residues 326–327; that stretch reads SL.

Belongs to the G-protein coupled receptor 1 family. In terms of tissue distribution, pituitary gland.

It localises to the cell membrane. Functionally, receptor for gonadotropin releasing hormone (GnRH) that mediates the action of GnRH to stimulate the secretion of the gonadotropic hormones luteinizing hormone (LH) and follicle-stimulating hormone (FSH). This receptor mediates its action by association with G-proteins that activate a phosphatidylinositol-calcium second messenger system. In Mus musculus (Mouse), this protein is Gonadotropin-releasing hormone receptor (Gnrhr).